Here is a 258-residue protein sequence, read N- to C-terminus: Meiotic drive suppressor wtf20 (258 aa).

The segment at 1-71 (MKNNYTSLKS…GPTEIANPNV (71 aa)) is disordered. The segment covering 19-30 (KTDHEIDLEKGL) has biased composition (basic and acidic residues). The next 3 membrane-spanning stretches (helical) occupy residues 84 to 106 (IYFLLRLLISVLAVSVVFFTAWV), 121 to 140 (FSVTIGITCPILFIAIFYFY), and 196 to 216 (SASAFTFMAVSSILIFIAETV).

The protein belongs to the WTF family. As to quaternary structure, homomer. Interacts with other proteins that exhibit high sequence similarity.

It is found in the spore membrane. The protein resides in the vacuole membrane. Its function is as follows. Acts as a suppressor component of the dual wtf meiotic drive system, and can suppress but not confer meiotic drive by compatible poisons. Wtf meiotic drive systems promote unequal transmission of alleles from the parental zygote to progeny spores by encoding a poison and an antidote from the same locus; the poison is trans-acting and forms toxic aggregates in all spores within an ascus, wherease the antidote is spore-specific and targets aggregates for degradation by the vacuole. Meiotic drive by wtf systems therefore lead to poisoning of all progeny that do not inherit the dual poison/antidote allele, or express a compatible antidote. The chain is Meiotic drive suppressor wtf20 from Schizosaccharomyces pombe (strain 972 / ATCC 24843) (Fission yeast).